A 347-amino-acid chain; its full sequence is Gas vesicle ATPase GvpN1 (347 aa).

A compositionally biased stretch (basic residues) spans 1–11 (MTNESRKRKVR). The tract at residues 1–64 (MTNESRKRKV…EGFVPEEQSF (64 aa)) is disordered. A compositionally biased stretch (basic and acidic residues) spans 18-55 (SRGDKKQGRSQSRDDKEIERLERQNDARGQESSTHVDE). An ATP-binding site is contributed by 91–98 (GPTGCGKT).

It belongs to the CbbQ/NirQ/NorQ/GpvN family. In terms of assembly, forms homodimers, forms a GvpN1-GvpO1 heterodimer, interacts with GvpC1 (via the latter's C-terminus) and GvpL, might interact with GvpA1.

It is found in the gas vesicle. It localises to the cytoplasm. The enzyme catalyses ATP + H2O = ADP + phosphate + H(+). An ATPase that functions in gas vesicle formation. A minor component of the gas vesicle, also found in soluble extracts. Probably enhances gas vesicle formation. Gas vesicles are hollow, gas filled proteinaceous nanostructures found in several microbial planktonic microorganisms. They allow positioning of halobacteria at the optimal depth for growth in the poorly aerated, shallow brine pools of their habitat. Its function is as follows. Expression of a 9.5 kb p-vac DNA fragment containing 2 divergently transcribed regions (gvpD-gvpE-gvpF-gvpG-gvpH-gvpI-gvpJ-gvpK-gvpL-gvpM and gvpA-gvpC-gvpN-gvpO) allows H.volcanii to produce gas vesicles. A similar region restores gas vesicle production in H.halobium without the p-vac locus, but which still have the c-vac locus. The polypeptide is Gas vesicle ATPase GvpN1 (gvpN11) (Halobacterium salinarum (strain ATCC 700922 / JCM 11081 / NRC-1) (Halobacterium halobium)).